Here is a 370-residue protein sequence, read N- to C-terminus: WAT1-related protein At1g44800 (370 aa).

Helical transmembrane passes span 11 to 31, 41 to 61, 67 to 87, 102 to 122, 142 to 162, 182 to 202, 216 to 236, 252 to 272, 278 to 298, and 303 to 323; these read PILAIISLQFGYAGMYIITMV, VLATYRHVVATVVMAPFALMF, PKMTLAIFWRLLALGILEPLM, SYTSAFTNALPAVTFILALIF, VITVGGAMIMTLYKGPAIEIV, WVLGTIAIMGSISTWAAFFIL, LVTLICGIGTILNAIASLIMV, AAVYSGVVCSGIAYYIQSIVI, VFTTSFSPMCMIITAFLGALV, and IHLGSIIGAVFIVLGLYSVVW. EamA domains follow at residues 23–143 and 195–322; these read AGMY…GTVI and TWAA…YSVV.

The protein belongs to the drug/metabolite transporter (DMT) superfamily. Plant drug/metabolite exporter (P-DME) (TC 2.A.7.4) family.

The protein resides in the membrane. In Arabidopsis thaliana (Mouse-ear cress), this protein is WAT1-related protein At1g44800.